Here is a 298-residue protein sequence, read N- to C-terminus: uncharacterized protein (298 aa).

10 helical membrane passes run 9–28 (GYVL…LYFK), 38–60 (IIVQ…WKHP), 72–94 (RFVV…VWAV), 104–121 (LGYY…MLLL), 128–145 (LQWL…QQVW), 150–167 (LPWV…YGLI), 174–196 (AALP…WLLF), 211–233 (PEAL…FNAA), 240–262 (ATLG…LLFG), and 272–291 (AFAF…WRSL). One can recognise an EamA domain in the interval 18–141 (VIWGLFPLYF…AVALASLGVA (124 aa)).

The protein belongs to the EamA transporter family.

It localises to the cell membrane. This is an uncharacterized protein from Pseudomonas aeruginosa (strain ATCC 15692 / DSM 22644 / CIP 104116 / JCM 14847 / LMG 12228 / 1C / PRS 101 / PAO1).